Here is a 245-residue protein sequence, read N- to C-terminus: Cell division protein ZapD (245 aa).

The protein belongs to the ZapD family. In terms of assembly, interacts with FtsZ.

Its subcellular location is the cytoplasm. Its function is as follows. Cell division factor that enhances FtsZ-ring assembly. Directly interacts with FtsZ and promotes bundling of FtsZ protofilaments, with a reduction in FtsZ GTPase activity. The protein is Cell division protein ZapD of Photobacterium profundum (strain SS9).